Consider the following 100-residue polypeptide: Integration host factor subunit beta (100 aa).

The segment at 53–100 is disordered; sequence LHHRPPRIGRNPKTGEPVALPGKYVPHFKPGKELRDRVNAGRHNPIQS. A compositionally biased stretch (basic and acidic residues) spans 82–91; sequence PGKELRDRVN.

It belongs to the bacterial histone-like protein family. As to quaternary structure, heterodimer of an alpha and a beta chain.

In terms of biological role, this protein is one of the two subunits of integration host factor, a specific DNA-binding protein that functions in genetic recombination as well as in transcriptional and translational control. The sequence is that of Integration host factor subunit beta from Alkalilimnicola ehrlichii (strain ATCC BAA-1101 / DSM 17681 / MLHE-1).